Consider the following 467-residue polypeptide: MGFSAEQAKKDGKDQSPVSESSSVGGTSPATASSVVSPNEPKLSGKEAKALKKARKQASRRAKAEAAAANNPPGVSEEKKVAIPNKNSNQQKKASKQNPQNSPETDANLQEKKIFEEKQVSIFSHLDWRRRRTTENIPKDIHPAVIRLGLKLANYKIFGSNQRCIDLLKTFKIVIQDYQTPYGTTLSRHLTTHINSQIAYLVSTRPLSISMGNAIRFLKLEISVLDIDLTDDEGKELLLEKIDSYIRDRIIIAGQVIVQAATEKIQDGDVILTYLHSSTVNDVLIHAKNVGKKFRVVVVDSRPEFEGRVCLKLLTEHGIECTYVMISALSYIMQEVTKIFLGGHAMLSNGALYSRAGTSLISLLGHESNVPVIACCESYKFTERIQLDSLVYNELAPGDQLVNMGVDDFEEKPGVLANWKSVKNLKLLSLKYDVTPPRLITVCVCEMGLLPSTSVPAIINEFKQVYA.

The interval 1 to 106 (MGFSAEQAKK…QNPQNSPETD (106 aa)) is disordered. Residues Ser16, Ser19, Ser21, and Ser23 each carry the phosphoserine modification. Residues 16-37 (SPVSESSSVGGTSPATASSVVS) are compositionally biased toward polar residues. Position 27 is a phosphothreonine (Thr27). 2 positions are modified to phosphoserine: Ser28 and Ser37. A compositionally biased stretch (basic residues) spans 51–61 (LKKARKQASRR). Residues 84 to 102 (PNKNSNQQKKASKQNPQNS) are compositionally biased toward low complexity.

It belongs to the eIF-2B alpha/beta/delta subunits family. As to quaternary structure, component of the translation initiation factor 2B (eIF2B) complex which is a heterodecamer of two sets of five different subunits: alpha, beta, gamma, delta and epsilon. Subunits alpha, beta and delta comprise a regulatory subcomplex and subunits epsilon and gamma comprise a catalytic subcomplex. Within the complex, the hexameric regulatory complex resides at the center, with the two heterodimeric catalytic subcomplexes bound on opposite sides.

Its subcellular location is the cytoplasm. It localises to the cytosol. Acts as a component of the translation initiation factor 2B (eIF2B) complex, which catalyzes the exchange of GDP for GTP on the eukaryotic initiation factor 2 (eIF2) complex gamma subunit. Its guanine nucleotide exchange factor activity is repressed when bound to eIF2 complex phosphorylated on the alpha subunit, thereby limiting the amount of methionyl-initiator methionine tRNA available to the ribosome and consequently global translation is repressed. The chain is Translation initiation factor eIF2B subunit delta (tif224) from Schizosaccharomyces pombe (strain 972 / ATCC 24843) (Fission yeast).